The following is a 170-amino-acid chain: ATP synthase subunit b (170 aa).

The helical transmembrane segment at Ile-22–Leu-44 threads the bilayer.

It belongs to the ATPase B chain family. F-type ATPases have 2 components, F(1) - the catalytic core - and F(0) - the membrane proton channel. F(1) has five subunits: alpha(3), beta(3), gamma(1), delta(1), epsilon(1). F(0) has four main subunits: a(1), b(1), b'(1) and c(10-14). The alpha and beta chains form an alternating ring which encloses part of the gamma chain. F(1) is attached to F(0) by a central stalk formed by the gamma and epsilon chains, while a peripheral stalk is formed by the delta, b and b' chains.

It is found in the cellular thylakoid membrane. Functionally, f(1)F(0) ATP synthase produces ATP from ADP in the presence of a proton or sodium gradient. F-type ATPases consist of two structural domains, F(1) containing the extramembraneous catalytic core and F(0) containing the membrane proton channel, linked together by a central stalk and a peripheral stalk. During catalysis, ATP synthesis in the catalytic domain of F(1) is coupled via a rotary mechanism of the central stalk subunits to proton translocation. Its function is as follows. Component of the F(0) channel, it forms part of the peripheral stalk, linking F(1) to F(0). The sequence is that of ATP synthase subunit b from Prochlorococcus marinus (strain NATL1A).